The primary structure comprises 208 residues: Virion protein US10 homolog (208 aa).

Positions 17 to 61 are disordered; the sequence is ARGAKLSPGQHPRPSHAVRGRTAPGTRSSRRRTCEDGTSGPRDPR. A zinc finger spans residues 167-179; it reads CAFWCCLAHAATC.

It belongs to the herpesviridae US10 family. Phosphorylated.

It localises to the virion tegument. It is found in the host nucleus matrix. This Homo sapiens (Human) protein is Virion protein US10 homolog.